A 296-amino-acid polypeptide reads, in one-letter code: Probable AP endonuclease (296 aa).

Cys-16 and Cys-20 are joined by a disulfide. Positions 78, 115, 142, 182, 218, 231, 233, and 271 each coordinate Zn(2+).

Belongs to the AP endonuclease 2 family. The cofactor is Zn(2+).

The protein resides in the host nucleus. It is found in the host cytoplasm. It localises to the virion. Endonuclease that plays a role in DNA repair. Cleaves phosphodiester bonds on the 5' side of apurinic or apyrimidinic sites (AP sites). In addition to endonuclease activity, the ASFV enzyme has a proofreading 3'-5' exonuclease activity that is considerably more efficient in the elimination of a mismatch than in that of a correctly paired base. Displays 3'-phosphatase and 3'-repair diesterase activities. The single nucleotide gaps generated by the AP endonuclease are filled by the viral AP endonuclease and DNA ligase. In Ornithodoros (relapsing fever ticks), this protein is Probable AP endonuclease.